Reading from the N-terminus, the 257-residue chain is uncharacterized protein (257 aa).

The helical transmembrane segment at 7 to 27 (LFLCVSFLLITIFIGGGGFMN) threads the bilayer.

The protein belongs to the staphylococcal tandem lipoprotein family.

It is found in the cell membrane. This is an uncharacterized protein from Staphylococcus epidermidis (strain ATCC 12228 / FDA PCI 1200).